We begin with the raw amino-acid sequence, 395 residues long: Allantoicase (395 aa).

The protein belongs to the allantoicase family.

It carries out the reaction allantoate + H2O = (S)-ureidoglycolate + urea. It functions in the pathway nitrogen metabolism; (S)-allantoin degradation; (S)-ureidoglycolate from allantoate (aminidohydrolase route): step 1/1. Utilization of purines as secondary nitrogen sources, when primary sources are limiting. The polypeptide is Allantoicase (allc) (Danio rerio (Zebrafish)).